Consider the following 576-residue polypeptide: Phosphoenolpyruvate-protein phosphotransferase (576 aa).

His189 serves as the catalytic Tele-phosphohistidine intermediate. Positions 296 and 332 each coordinate phosphoenolpyruvate. Mg(2+) is bound by residues Glu431 and Asp455. Residues 454–455 (ND) and Arg465 contribute to the phosphoenolpyruvate site. The Proton donor role is filled by Cys502.

The protein belongs to the PEP-utilizing enzyme family. As to quaternary structure, homodimer. The cofactor is Mg(2+).

It is found in the cytoplasm. It carries out the reaction L-histidyl-[protein] + phosphoenolpyruvate = N(pros)-phospho-L-histidyl-[protein] + pyruvate. In terms of biological role, general (non sugar-specific) component of the phosphoenolpyruvate-dependent sugar phosphotransferase system (sugar PTS). This major carbohydrate active-transport system catalyzes the phosphorylation of incoming sugar substrates concomitantly with their translocation across the cell membrane. Enzyme I transfers the phosphoryl group from phosphoenolpyruvate (PEP) to the phosphoryl carrier protein (HPr). In Buchnera aphidicola subsp. Baizongia pistaciae (strain Bp), this protein is Phosphoenolpyruvate-protein phosphotransferase (ptsI).